The primary structure comprises 867 residues: Putative ribosome biogenesis ATPase nvl (867 aa).

The segment at 70-203 (LSSCESSENE…NNNNGNNKDN (134 aa)) is disordered. Residues 110–122 (EQLTSQYKQNIKN) show a composition bias toward polar residues. Low complexity-rich tracts occupy residues 123-132 (TPPTTTTTTP), 141-172 (IPSN…TPNS), and 180-203 (NSSN…NKDN). Residue 257–264 (GPSGCGKT) participates in ATP binding. A disordered region spans residues 351-370 (SSNNSTNEPNEQTEQQQQQQ). 607–614 (GPPGCGKT) is an ATP binding site. Positions 834–843 (DINKSRDKKP) are enriched in basic and acidic residues. The segment at 834 to 855 (DINKSRDKKPNNSNNIPITNNI) is disordered. Low complexity predominate over residues 844–855 (NNSNNIPITNNI).

The protein belongs to the AAA ATPase family.

It is found in the nucleus. The protein resides in the nucleolus. The protein localises to the nucleoplasm. Its function is as follows. Involved in ribosome biogenesis. In Dictyostelium discoideum (Social amoeba), this protein is Putative ribosome biogenesis ATPase nvl (nvl).